The following is a 342-amino-acid chain: 4-hydroxy-2-oxovalerate aldolase (342 aa).

A Pyruvate carboxyltransferase domain is found at 7–257 (IWITEVALRD…KTGVDLYKMM (251 aa)). 15 to 16 (RD) contributes to the substrate binding site. Residue Asp-16 coordinates Mn(2+). Catalysis depends on His-19, which acts as the Proton acceptor. The substrate site is built by Ser-169 and His-196. His-196 and His-198 together coordinate Mn(2+). Tyr-287 is a binding site for substrate.

This sequence belongs to the 4-hydroxy-2-oxovalerate aldolase family.

It carries out the reaction (S)-4-hydroxy-2-oxopentanoate = acetaldehyde + pyruvate. The chain is 4-hydroxy-2-oxovalerate aldolase (nbaI) from Geobacillus thermodenitrificans (strain NG80-2).